A 203-amino-acid chain; its full sequence is Adenosylcobalamin/alpha-ribazole phosphatase (203 aa).

Residue H8 is the Tele-phosphohistidine intermediate of the active site. The Proton donor/acceptor role is filled by E81.

It belongs to the phosphoglycerate mutase family.

It carries out the reaction adenosylcob(III)alamin 5'-phosphate + H2O = adenosylcob(III)alamin + phosphate. The catalysed reaction is alpha-ribazole 5'-phosphate + H2O = alpha-ribazole + phosphate. Its pathway is nucleoside biosynthesis; alpha-ribazole biosynthesis; alpha-ribazole from 5,6-dimethylbenzimidazole: step 2/2. Its function is as follows. Catalyzes the conversion of adenosylcobalamin 5'-phosphate to adenosylcobalamin (vitamin B12); involved in the assembly of the nucleotide loop of cobalamin. Also catalyzes the hydrolysis of the phospho group from alpha-ribazole 5'-phosphate to form alpha-ribazole. The protein is Adenosylcobalamin/alpha-ribazole phosphatase (cobC) of Escherichia coli (strain K12).